Reading from the N-terminus, the 390-residue chain is GTPase Obg (390 aa).

An Obg domain is found at 1 to 159; the sequence is MKFVDEASIL…RELLLELMLL (159 aa). A disordered region spans residues 127-147; that stretch reads NTRFKSSVNRTPRQKTNGTPG. A compositionally biased stretch (polar residues) spans 129–145; the sequence is RFKSSVNRTPRQKTNGT. Residues 160–333 enclose the OBG-type G domain; sequence ADVGMLGMPN…LCWDVMTFII (174 aa). Residues 166-173, 191-195, 213-216, 283-286, and 314-316 each bind GTP; these read GMPNAGKS, FTTLV, DIPG, NKID, and SAA. Mg(2+) is bound by residues serine 173 and threonine 193.

This sequence belongs to the TRAFAC class OBG-HflX-like GTPase superfamily. OBG GTPase family. In terms of assembly, monomer. Mg(2+) is required as a cofactor.

The protein localises to the cytoplasm. In terms of biological role, an essential GTPase which binds GTP, GDP and possibly (p)ppGpp with moderate affinity, with high nucleotide exchange rates and a fairly low GTP hydrolysis rate. Plays a role in control of the cell cycle, stress response, ribosome biogenesis and in those bacteria that undergo differentiation, in morphogenesis control. In Escherichia fergusonii (strain ATCC 35469 / DSM 13698 / CCUG 18766 / IAM 14443 / JCM 21226 / LMG 7866 / NBRC 102419 / NCTC 12128 / CDC 0568-73), this protein is GTPase Obg.